The chain runs to 148 residues: Urease accessory protein UreE (148 aa).

It belongs to the UreE family.

Its subcellular location is the cytoplasm. Its function is as follows. Involved in urease metallocenter assembly. Binds nickel. Probably functions as a nickel donor during metallocenter assembly. In Halalkalibacterium halodurans (strain ATCC BAA-125 / DSM 18197 / FERM 7344 / JCM 9153 / C-125) (Bacillus halodurans), this protein is Urease accessory protein UreE.